A 340-amino-acid polypeptide reads, in one-letter code: Methane monooxygenase component C (340 aa).

Residues 1-92 (MYQIVIETED…DLHLLVPYTY (92 aa)) form the 2Fe-2S ferredoxin-type domain. [2Fe-2S] cluster contacts are provided by cysteine 37, cysteine 41, cysteine 44, and cysteine 76. The FAD-binding FR-type domain occupies 101–205 (QTNWLAEILA…RGPAGSFFLH (105 aa)). 215–229 (VAGGTGLSPVLSMIR) lines the FAD pocket.

In terms of assembly, the soluble methane monooxygenase (sMMO) consists of four components A/MMOH (composed of alpha/MmoX, beta/MmoY and gamma/MmoZ), B/MMOB (MmoB), C/MMOR (MmoC) and D/MMOD (MmoD). It depends on [2Fe-2S] cluster as a cofactor.

It catalyses the reaction methane + NADH + O2 + H(+) = methanol + NAD(+) + H2O. It carries out the reaction methane + NADPH + O2 + H(+) = methanol + NADP(+) + H2O. Functionally, responsible for the initial oxygenation of methane to methanol in methanotrophs. It also catalyzes the monohydroxylation of a variety of unactivated alkenes, alicyclic, aromatic and heterocyclic compounds. The component C is the iron-sulfur flavoprotein of sMMO. The polypeptide is Methane monooxygenase component C (mmoC) (Methylosinus trichosporium).